The chain runs to 237 residues: Uridylate kinase (237 aa).

Position 10–13 (10–13 (KFSG)) interacts with ATP. Positions 18-23 (GDSGFG) are involved in allosteric activation by GTP. Glycine 52 contacts UMP. ATP contacts are provided by glycine 53 and arginine 57. UMP contacts are provided by residues aspartate 73 and 134–141 (TGNPFFTT). The ATP site is built by threonine 161, tyrosine 167, and aspartate 170.

This sequence belongs to the UMP kinase family. As to quaternary structure, homohexamer.

Its subcellular location is the cytoplasm. It catalyses the reaction UMP + ATP = UDP + ADP. It functions in the pathway pyrimidine metabolism; CTP biosynthesis via de novo pathway; UDP from UMP (UMPK route): step 1/1. Its activity is regulated as follows. Allosterically activated by GTP. Inhibited by UTP. Functionally, catalyzes the reversible phosphorylation of UMP to UDP. In Campylobacter hominis (strain ATCC BAA-381 / DSM 21671 / CCUG 45161 / LMG 19568 / NCTC 13146 / CH001A), this protein is Uridylate kinase.